The chain runs to 103 residues: Co-chaperonin GroES (103 aa).

Belongs to the GroES chaperonin family. As to quaternary structure, heptamer of 7 subunits arranged in a ring. Interacts with the chaperonin GroEL.

The protein resides in the cytoplasm. Together with the chaperonin GroEL, plays an essential role in assisting protein folding. The GroEL-GroES system forms a nano-cage that allows encapsulation of the non-native substrate proteins and provides a physical environment optimized to promote and accelerate protein folding. GroES binds to the apical surface of the GroEL ring, thereby capping the opening of the GroEL channel. The chain is Co-chaperonin GroES from Synechococcus elongatus (strain ATCC 33912 / PCC 7942 / FACHB-805) (Anacystis nidulans R2).